Consider the following 283-residue polypeptide: Shikimate dehydrogenase (NADP(+)) (283 aa).

Shikimate is bound by residues 16 to 18 (SLS) and Thr63. Residue Lys67 is the Proton acceptor of the active site. An NADP(+)-binding site is contributed by Asp79. Shikimate is bound by residues Asn88 and Asp103. NADP(+) contacts are provided by residues 128–132 (GAGGA), Ala223, and Gly243.

The protein belongs to the shikimate dehydrogenase family. Homodimer.

The catalysed reaction is shikimate + NADP(+) = 3-dehydroshikimate + NADPH + H(+). It functions in the pathway metabolic intermediate biosynthesis; chorismate biosynthesis; chorismate from D-erythrose 4-phosphate and phosphoenolpyruvate: step 4/7. Involved in the biosynthesis of the chorismate, which leads to the biosynthesis of aromatic amino acids. Catalyzes the reversible NADPH linked reduction of 3-dehydroshikimate (DHSA) to yield shikimate (SA). The polypeptide is Shikimate dehydrogenase (NADP(+)) (Xanthomonas campestris pv. campestris (strain B100)).